The chain runs to 679 residues: Dihydroxyacetone phosphate acyltransferase (679 aa).

Ser-11 bears the Phosphoserine mark. Positions 161–166 match the HXXXXD motif motif; it reads HRSYID. N6-acetyllysine is present on Lys-642.

This sequence belongs to the GPAT/DAPAT family. As to quaternary structure, part of a heterotrimeric complex composed of GNPAT, AGPS and a modified form of GNPAT.

It localises to the peroxisome membrane. The catalysed reaction is dihydroxyacetone phosphate + an acyl-CoA = a 1-acylglycerone 3-phosphate + CoA. It catalyses the reaction dihydroxyacetone phosphate + hexadecanoyl-CoA = 1-hexadecanoylglycerone 3-phosphate + CoA. The protein operates within membrane lipid metabolism; glycerophospholipid metabolism. In terms of biological role, dihydroxyacetonephosphate acyltransferase catalyzing the first step in the biosynthesis of plasmalogens, a subset of phospholipids that differ from other glycerolipids by having an alkyl chain attached through a vinyl ether linkage at the sn-1 position of the glycerol backbone, and which unique physical properties have an impact on various aspects of cell signaling and membrane biology. This chain is Dihydroxyacetone phosphate acyltransferase, found in Oryctolagus cuniculus (Rabbit).